We begin with the raw amino-acid sequence, 158 residues long: NAD(P)H-quinone oxidoreductase subunit J, chloroplastic (158 aa).

Belongs to the complex I 30 kDa subunit family. As to quaternary structure, NDH is composed of at least 16 different subunits, 5 of which are encoded in the nucleus.

The protein resides in the plastid. It localises to the chloroplast thylakoid membrane. It carries out the reaction a plastoquinone + NADH + (n+1) H(+)(in) = a plastoquinol + NAD(+) + n H(+)(out). It catalyses the reaction a plastoquinone + NADPH + (n+1) H(+)(in) = a plastoquinol + NADP(+) + n H(+)(out). NDH shuttles electrons from NAD(P)H:plastoquinone, via FMN and iron-sulfur (Fe-S) centers, to quinones in the photosynthetic chain and possibly in a chloroplast respiratory chain. The immediate electron acceptor for the enzyme in this species is believed to be plastoquinone. Couples the redox reaction to proton translocation, and thus conserves the redox energy in a proton gradient. In Helianthus annuus (Common sunflower), this protein is NAD(P)H-quinone oxidoreductase subunit J, chloroplastic.